The sequence spans 419 residues: Gamma-glutamyl phosphate reductase (419 aa).

Belongs to the gamma-glutamyl phosphate reductase family.

It localises to the cytoplasm. It carries out the reaction L-glutamate 5-semialdehyde + phosphate + NADP(+) = L-glutamyl 5-phosphate + NADPH + H(+). The protein operates within amino-acid biosynthesis; L-proline biosynthesis; L-glutamate 5-semialdehyde from L-glutamate: step 2/2. In terms of biological role, catalyzes the NADPH-dependent reduction of L-glutamate 5-phosphate into L-glutamate 5-semialdehyde and phosphate. The product spontaneously undergoes cyclization to form 1-pyrroline-5-carboxylate. The protein is Gamma-glutamyl phosphate reductase of Azobacteroides pseudotrichonymphae genomovar. CFP2.